Consider the following 388-residue polypeptide: 3-dehydroquinate synthase (388 aa).

It belongs to the archaeal-type DHQ synthase family.

It carries out the reaction 2-amino-2,3,7-trideoxy-D-lyxo-hept-6-ulosonate + NAD(+) + H2O = 3-dehydroquinate + NH4(+) + NADH + H(+). Catalyzes the oxidative deamination and cyclization of 2-amino-3,7-dideoxy-D-threo-hept-6-ulosonic acid (ADH) to yield 3-dehydroquinate (DHQ), which is fed into the canonical shikimic pathway of aromatic amino acid biosynthesis. The protein is 3-dehydroquinate synthase of Haloarcula marismortui (strain ATCC 43049 / DSM 3752 / JCM 8966 / VKM B-1809) (Halobacterium marismortui).